The following is a 221-amino-acid chain: UPF0319 protein CGSHiEE_03630 (221 aa).

Residues 1-21 form the signal peptide; that stretch reads MKLRAVVLGLATLCTSTATFA.

This sequence belongs to the UPF0319 family.

The protein is UPF0319 protein CGSHiEE_03630 of Haemophilus influenzae (strain PittEE).